Consider the following 338-residue polypeptide: Isopenicillin N synthase (338 aa).

Isopenicillin N contacts are provided by arginine 89, tyrosine 93, serine 185, and tyrosine 191. N-[(5S)-5-amino-5-carboxypentanoyl]-L-cysteinyl-D-valine contacts are provided by arginine 89, tyrosine 93, serine 185, tyrosine 191, histidine 216, and aspartate 218. A Fe2OG dioxygenase domain is found at 182 to 290 (TLSSVVLIRY…RQSLPFFVNL (109 aa)). Fe(2+) contacts are provided by histidine 216, aspartate 218, and histidine 272. Arginine 281 is a binding site for 2-oxoglutarate. Residue serine 283 participates in isopenicillin N binding. Residue serine 283 coordinates N-[(5S)-5-amino-5-carboxypentanoyl]-L-cysteinyl-D-valine.

Belongs to the iron/ascorbate-dependent oxidoreductase family. Monomer. Fe(2+) is required as a cofactor.

Its subcellular location is the cytoplasm. It localises to the cytosol. The catalysed reaction is N-[(5S)-5-amino-5-carboxypentanoyl]-L-cysteinyl-D-valine + O2 = isopenicillin N + 2 H2O. Its pathway is antibiotic biosynthesis; penicillin G biosynthesis; penicillin G from L-alpha-aminoadipate and L-cysteine and L-valine: step 2/3. In terms of biological role, isopenicillin N synthase; part of the gene cluster that mediates the biosynthesis of penicillin, the world's most important antibiotic. IpnA catalyzes the cyclization of the tripeptide N-[(5S)-5-amino-5-carboxypentanoyl]-L-cysteinyl-D-valine (LLD-ACV or ACV) to form isopenicillin N (IPN) that contains the beta-lactam nucleus. The penicillin biosynthesis occurs via 3 enzymatic steps, the first corresponding to the production of the tripeptide N-[(5S)-5-amino-5-carboxypentanoyl]-L-cysteinyl-D-valine (LLD-ACV or ACV) by the NRPS pcbAB. The tripeptide ACV is then cyclized to isopenicillin N (IPN) by the isopenicillin N synthase pcbC that forms the beta-lactam nucleus. Finally, the alpha-aminoadipyl side chain is exchanged for phenylacetic acid by the isopenicillin N acyltransferase penDE to yield penicillin in the peroxisomal matrix. This Hapsidospora chrysogena (Acremonium chrysogenum) protein is Isopenicillin N synthase (PCBC).